The sequence spans 556 residues: Formate--tetrahydrofolate ligase (556 aa).

65–72 (TPAGEGKS) is a binding site for ATP.

The protein belongs to the formate--tetrahydrofolate ligase family.

The enzyme catalyses (6S)-5,6,7,8-tetrahydrofolate + formate + ATP = (6R)-10-formyltetrahydrofolate + ADP + phosphate. The protein operates within one-carbon metabolism; tetrahydrofolate interconversion. The polypeptide is Formate--tetrahydrofolate ligase (Clostridium botulinum (strain Alaska E43 / Type E3)).